The chain runs to 443 residues: MERKRGREMNPPSADPPSATPVARANLPGSVAAAFHGRPCSQGTTTLKRVNERYKIVGFISSGTYGRVYKAEGKNGRTGEFAIKKFKPDKEGELQYSGISQSAIREMALCTELAHPNVVHTVEIILEEKCIFIVFEYAEHDLLQIIHHHNQPQRQAIPARTIKSILYQLLQGLVYLHRNWVMHRDLKPANIMVTSAGKVKIGDLGLARLFYKPLQSLFSGDKVVVTIWYRAPELLLGSRHYTPAVDLWAVGCIFAELLSLRPIFKGEEAKMDSKKTVPFQRNQMQKIVEIMGMPSKDRWPLLTAMPEYPQLSSLIAGNAARFARPQGGDGLDRWYNQTLINNQYPAGPGPETPGAEGLALLKQLLEYDPQKRLTAEKALEHRYFTEHGKPSDNCFEDSKIKYPVRRVSQEDNDIRTSSLPGTKRSGLPDDSLMGRPAKRLKEG.

The interval 1–24 is disordered; that stretch reads MERKRGREMNPPSADPPSATPVAR. Positions 54-384 constitute a Protein kinase domain; sequence YKIVGFISSG…AEKALEHRYF (331 aa). ATP is bound by residues 60 to 68 and K84; that span reads ISSGTYGRV. Residue D185 is the Proton acceptor of the active site. Residues 405–443 are disordered; sequence RRVSQEDNDIRTSSLPGTKRSGLPDDSLMGRPAKRLKEG.

It belongs to the protein kinase superfamily. CMGC Ser/Thr protein kinase family. CDC2/CDKX subfamily. In terms of assembly, component of the srb8-11 complex, a regulatory module of the Mediator complex. Requires Mg(2+) as cofactor.

The protein localises to the nucleus. The enzyme catalyses L-seryl-[protein] + ATP = O-phospho-L-seryl-[protein] + ADP + H(+). It catalyses the reaction L-threonyl-[protein] + ATP = O-phospho-L-threonyl-[protein] + ADP + H(+). The catalysed reaction is [DNA-directed RNA polymerase] + ATP = phospho-[DNA-directed RNA polymerase] + ADP + H(+). Functionally, component of the srb8-11 complex. The srb8-11 complex is a regulatory module of the Mediator complex which is itself dependent transcription. The srb8-11 complex may be involved in the transcriptional repression of a subset of genes regulated by Mediator. It may inhibit the association of the Mediator complex with RNA polymerase II to form the holoenzyme complex. The srb8-11 complex phosphorylates the C-terminal domain (CTD) of the largest subunit of RNA polymerase II. This is Serine/threonine-protein kinase SSN3 (SSN3) from Phaeosphaeria nodorum (strain SN15 / ATCC MYA-4574 / FGSC 10173) (Glume blotch fungus).